A 130-amino-acid polypeptide reads, in one-letter code: Phosphomevalonate dehydratase small subunit (130 aa).

S62 acts as the Proton acceptor in catalysis.

Belongs to the AcnX type II small subunit family. As to quaternary structure, heterodimer composed of a large subunit (PMDh-L) and a small subunit (PMDh-S).

The enzyme catalyses (R)-5-phosphomevalonate = (2E)-3-methyl-5-phosphooxypent-2-enoate + H2O. It functions in the pathway isoprenoid biosynthesis; isopentenyl diphosphate biosynthesis via mevalonate pathway. In terms of biological role, component of a hydro-lyase that catalyzes the dehydration of mevalonate 5-phosphate (MVA5P) to form trans-anhydromevalonate 5-phosphate (tAHMP). Involved in the archaeal mevalonate (MVA) pathway, which provides fundamental precursors for isoprenoid biosynthesis, such as isopentenyl diphosphate (IPP) and dimethylallyl diphosphate (DMAPP). The polypeptide is Phosphomevalonate dehydratase small subunit (Thermococcus onnurineus (strain NA1)).